Reading from the N-terminus, the 174-residue chain is Gamma-crystallin D (174 aa).

2 Beta/gamma crystallin 'Greek key' domains span residues 2–40 and 41–83; these read GKIT…RVDS and GCWM…RLIP. The connecting peptide stretch occupies residues 84 to 87; sequence HAGS. Beta/gamma crystallin 'Greek key' domains follow at residues 88-128 and 129-171; these read HRLR…NVLE and GSWV…RRVI.

The protein belongs to the beta/gamma-crystallin family.

Its function is as follows. Crystallins are the dominant structural components of the vertebrate eye lens. The chain is Gamma-crystallin D (CRYGD) from Bos taurus (Bovine).